A 201-amino-acid polypeptide reads, in one-letter code: Putative tRNA-binding protein YtpR (201 aa).

The tRNA-binding domain maps to 90–200 (VDLSPKFVVG…GDYEAGDAFQ (111 aa)).

This chain is Putative tRNA-binding protein YtpR (ytpR), found in Bacillus subtilis (strain 168).